Reading from the N-terminus, the 213-residue chain is Adenylate kinase (213 aa).

Residue 10–15 coordinates ATP; it reads GSGKGT. Residues 30–59 are NMP; sequence STGDLFRTNIENDTPLGKEIKQIVENGQLV. AMP contacts are provided by residues Thr-31, Arg-36, 57–59, 85–88, and Gln-92; these read QLV and GFPR. The tract at residues 121 to 158 is LID; it reads GRRICQSCCKIFNIYTLPTKEKEICDFCQGILYQRKDD. Arg-122 serves as a coordination point for ATP. Zn(2+)-binding residues include Cys-125 and Cys-128. 131–132 serves as a coordination point for ATP; the sequence is IF. Zn(2+)-binding residues include Cys-145 and Cys-148. AMP is bound by residues Arg-155 and Arg-166. Position 194 (Lys-194) interacts with ATP.

It belongs to the adenylate kinase family. In terms of assembly, monomer.

The protein resides in the cytoplasm. The enzyme catalyses AMP + ATP = 2 ADP. It functions in the pathway purine metabolism; AMP biosynthesis via salvage pathway; AMP from ADP: step 1/1. In terms of biological role, catalyzes the reversible transfer of the terminal phosphate group between ATP and AMP. Plays an important role in cellular energy homeostasis and in adenine nucleotide metabolism. This Borrelia duttonii (strain Ly) protein is Adenylate kinase.